The following is a 254-amino-acid chain: Trans-aconitate 2-methyltransferase (254 aa).

The protein belongs to the methyltransferase superfamily. Tam family.

Its subcellular location is the cytoplasm. The catalysed reaction is trans-aconitate + S-adenosyl-L-methionine = (E)-3-(methoxycarbonyl)pent-2-enedioate + S-adenosyl-L-homocysteine. Its function is as follows. Catalyzes the S-adenosylmethionine monomethyl esterification of trans-aconitate. The polypeptide is Trans-aconitate 2-methyltransferase (Rhodococcus jostii (strain RHA1)).